The primary structure comprises 167 residues: UPF0225 protein VV1_2912 (167 aa).

This sequence belongs to the UPF0225 family.

This chain is UPF0225 protein VV1_2912, found in Vibrio vulnificus (strain CMCP6).